A 62-amino-acid polypeptide reads, in one-letter code: Sperm protamine P1 (62 aa).

A disordered region spans residues M1–Y62.

This sequence belongs to the protamine P1 family. Testis.

The protein localises to the nucleus. It is found in the chromosome. Protamines substitute for histones in the chromatin of sperm during the haploid phase of spermatogenesis. They compact sperm DNA into a highly condensed, stable and inactive complex. The sequence is that of Sperm protamine P1 (PRM1) from Lagostrophus fasciatus (Banded hare-wallaby).